A 118-amino-acid polypeptide reads, in one-letter code: Large ribosomal subunit protein bL20 (118 aa).

Belongs to the bacterial ribosomal protein bL20 family.

Functionally, binds directly to 23S ribosomal RNA and is necessary for the in vitro assembly process of the 50S ribosomal subunit. It is not involved in the protein synthesizing functions of that subunit. The sequence is that of Large ribosomal subunit protein bL20 from Shigella flexneri serotype 5b (strain 8401).